The chain runs to 484 residues: Probable autolysin PH (484 aa).

A Peptidase C51 domain is found at 5–148 (KNQAEKWFDN…YYDDPMYFIR (144 aa)). The region spanning 181 to 363 (IMLVAGHGYN…YSKLIAGAIH (183 aa)) is the MurNAc-LAA domain. Residues 402–472 (KETGYYTVAN…IATGEVDKAG (71 aa)) form the SH3b domain.

It catalyses the reaction Hydrolyzes the link between N-acetylmuramoyl residues and L-amino acid residues in certain cell-wall glycopeptides.. Functionally, has weak lytic activity toward S.aureus cells. Full-length protein has no activity, but fusion of the Peptidase C51 domain to the lysostaphin SH3 cell wall binding domain yields an active chimeric enzyme, suggesting that PH may be functional. The chain is Probable autolysin PH from Staphylococcus aureus (strain NCTC 8325 / PS 47).